Reading from the N-terminus, the 412-residue chain is Methylmalonic aciduria type A homolog, mitochondrial (412 aa).

The N-terminal 15 residues, 1 to 15 (MVVRALVRAHPLSRI), are a transit peptide targeting the mitochondrion. Residues 132–140 (GSPGVGKSS), aspartate 275, and 311–313 (SIM) contribute to the GTP site.

The protein belongs to the SIMIBI class G3E GTPase family. ArgK/MeaB subfamily.

It localises to the mitochondrion. Functionally, may have GTPase activity. May also bind and hydrolyze ATP. May function as chaperone. Likely to have a role in propionyl-CoA metabolism and adenosylcobalamin synthesis. In Caenorhabditis briggsae, this protein is Methylmalonic aciduria type A homolog, mitochondrial.